The following is a 164-amino-acid chain: SsrA-binding protein (164 aa).

The protein belongs to the SmpB family.

It is found in the cytoplasm. Functionally, required for rescue of stalled ribosomes mediated by trans-translation. Binds to transfer-messenger RNA (tmRNA), required for stable association of tmRNA with ribosomes. tmRNA and SmpB together mimic tRNA shape, replacing the anticodon stem-loop with SmpB. tmRNA is encoded by the ssrA gene; the 2 termini fold to resemble tRNA(Ala) and it encodes a 'tag peptide', a short internal open reading frame. During trans-translation Ala-aminoacylated tmRNA acts like a tRNA, entering the A-site of stalled ribosomes, displacing the stalled mRNA. The ribosome then switches to translate the ORF on the tmRNA; the nascent peptide is terminated with the 'tag peptide' encoded by the tmRNA and targeted for degradation. The ribosome is freed to recommence translation, which seems to be the essential function of trans-translation. This Corynebacterium glutamicum (strain R) protein is SsrA-binding protein.